The sequence spans 360 residues: Phospho-N-acetylmuramoyl-pentapeptide-transferase (360 aa).

10 helical membrane-spanning segments follow: residues 25–45, 73–93, 94–114, 134–154, 173–193, 198–218, 240–260, 262–282, 287–307, and 337–357; these read RTIYASLTALVISFVLGPWLI, TMGGVLIMSAVMFSTLLWADL, TNAYVWIALGVTFGFGLIGFV, FCLQVVVAGIAGTVLVYGLNG, PGYVLFAILVMVGASNAVNLT, GLAIVPVAIAAGTYMIFAYVA, VFCGALVGAGLGFLWYNAYPA, IFMGDVGSLPLGGALGVVAIL, LALVIVGGLFVMEAVSVILQV, and KVIVRFWIIAIMLALLSVSTL.

It belongs to the glycosyltransferase 4 family. MraY subfamily. It depends on Mg(2+) as a cofactor.

The protein resides in the cell inner membrane. The catalysed reaction is UDP-N-acetyl-alpha-D-muramoyl-L-alanyl-gamma-D-glutamyl-meso-2,6-diaminopimeloyl-D-alanyl-D-alanine + di-trans,octa-cis-undecaprenyl phosphate = di-trans,octa-cis-undecaprenyl diphospho-N-acetyl-alpha-D-muramoyl-L-alanyl-D-glutamyl-meso-2,6-diaminopimeloyl-D-alanyl-D-alanine + UMP. The protein operates within cell wall biogenesis; peptidoglycan biosynthesis. Functionally, catalyzes the initial step of the lipid cycle reactions in the biosynthesis of the cell wall peptidoglycan: transfers peptidoglycan precursor phospho-MurNAc-pentapeptide from UDP-MurNAc-pentapeptide onto the lipid carrier undecaprenyl phosphate, yielding undecaprenyl-pyrophosphoryl-MurNAc-pentapeptide, known as lipid I. The chain is Phospho-N-acetylmuramoyl-pentapeptide-transferase from Desulfatibacillum aliphaticivorans.